The following is a 274-amino-acid chain: Receptor-like protein 44 (274 aa).

The N-terminal stretch at 1–24 (MTRSHRLLLLLLLIFQTAQRLTTA) is a signal peptide. Over 25-223 (DPNDEACLKN…PLQEMMMKSK (199 aa)) the chain is Extracellular. N-linked (GlcNAc...) asparagine glycosylation is found at Asn48, Asn82, and Asn95. 4 LRR repeats span residues 96–121 (CTNL…QYLV), 123–144 (LAVL…LALC), 145–168 (AYLN…LGLL), and 169–192 (ARLS…LSNR). Asn127 carries N-linked (GlcNAc...) asparagine glycosylation. Asn191 and Asn200 each carry an N-linked (GlcNAc...) asparagine glycan. A helical membrane pass occupies residues 224 to 244 (GLSVMAIVGIGLGSGIASLMI). Residues 245–274 (SFTGVCLWLRITEKKIVEEEGKISQSMPDY) lie on the Cytoplasmic side of the membrane.

This sequence belongs to the RLP family.

The protein localises to the cell membrane. This Arabidopsis thaliana (Mouse-ear cress) protein is Receptor-like protein 44.